Consider the following 304-residue polypeptide: Glycine--tRNA ligase alpha subunit (304 aa).

The protein belongs to the class-II aminoacyl-tRNA synthetase family. Tetramer of two alpha and two beta subunits.

The protein resides in the cytoplasm. It carries out the reaction tRNA(Gly) + glycine + ATP = glycyl-tRNA(Gly) + AMP + diphosphate. This Actinobacillus pleuropneumoniae serotype 3 (strain JL03) protein is Glycine--tRNA ligase alpha subunit.